A 1214-amino-acid polypeptide reads, in one-letter code: Zinc finger E-box-binding homeobox 2 (1214 aa).

The segment at 1-101 (MKQPIMADGP…GVEHPWHNNE (101 aa)) is disordered. Positions 12–24 (CKRRKQANPRRKN) are enriched in basic residues. Polar residues predominate over residues 57 to 74 (DQETSPASVPNHESSPHV). A compositionally biased stretch (basic and acidic residues) spans 89–98 (REGGVEHPWH). S142 is modified (phosphoserine). 3 C2H2-type zinc fingers span residues 211-234 (LTCP…KYRH), 241-263 (FSCP…MVTH), and 282-304 (FKCT…LRIH). Residues 310 to 334 (YECPNCKKRFSHSGSYSSHISSKKC) form a C2H2-type 4; atypical zinc finger. Residues S356, S360, and S364 each carry the phosphoserine modification. Residue K377 is modified to N6-acetyllysine. K391 is covalently cross-linked (Glycyl lysine isopeptide (Lys-Gly) (interchain with G-Cter in SUMO); alternate). Residue K391 forms a Glycyl lysine isopeptide (Lys-Gly) (interchain with G-Cter in SUMO2); alternate linkage. The SMAD-MH2 binding domain stretch occupies residues 437–487 (QHLGVGMEAPLLGFPTMNSNLSEVQKVLQIVDNTVSRQKMDCKAEEISKLK). Residues K479 and K555 each participate in a glycyl lysine isopeptide (Lys-Gly) (interchain with G-Cter in SUMO2) cross-link. The segment at 581–605 (FSCQFCKESFPGPIPLHQHERYLCK) adopts a C2H2-type 5; atypical zinc-finger fold. Residues K611 and K632 each participate in a glycyl lysine isopeptide (Lys-Gly) (interchain with G-Cter in SUMO2) cross-link. The homeobox; atypical DNA-binding region spans 644–703 (GMTSPINPYKDHMSVLKAYYAMNMEPNSDELLKISIAVGLPQEFVKEWFEQRKVYQYSNS). S647 carries the phosphoserine modification. Over residues 702-715 (NSRSPSLERSSKPL) the composition is skewed to low complexity. Disordered regions lie at residues 702-740 (NSRS…DSIT), 771-810 (PVEK…SSEE), and 832-857 (ATKN…ENSD). Residue K713 forms a Glycyl lysine isopeptide (Lys-Gly) (interchain with G-Cter in SUMO2) linkage. 2 positions are modified to phosphoserine: S731 and S780. Low complexity-rich tracts occupy residues 780–808 (SNTP…SFSS) and 840–854 (SSIS…SSSE). Phosphothreonine is present on T782. S784 is modified (phosphoserine). A Glycyl lysine isopeptide (Lys-Gly) (interchain with G-Cter in SUMO); alternate cross-link involves residue K866. K866 is covalently cross-linked (Glycyl lysine isopeptide (Lys-Gly) (interchain with G-Cter in SUMO2); alternate). 2 C2H2-type zinc fingers span residues 999-1021 (YACD…KYEH) and 1027-1049 (HQCQ…SRLH). The C2H2-type 8; atypical zinc finger occupies 1055–1076 (YQCDKCGKRFSHSGSYSQHMNH). Residues 1117-1214 (TPQGYSDSEE…HEEDNMEDGM (98 aa)) form a disordered region. Phosphoserine occurs at positions 1122 and 1124. Basic and acidic residues predominate over residues 1127–1155 (RESMPRDGESEKEHEKEGEDGYGKLGRQD). A compositionally biased stretch (acidic residues) spans 1156–1167 (GDEEFEEEEEES). Basic and acidic residues-rich tracts occupy residues 1168-1179 (ENKSMDTDPETI) and 1186-1205 (GDHS…KSDH). Phosphoserine is present on S1203.

It belongs to the delta-EF1/ZFH-1 C2H2-type zinc-finger family. As to quaternary structure, binds activated SMAD1, activated SMAD2 and activated SMAD3; binding with SMAD4 is not detected. Interacts with CBX4 and CTBP1. In terms of processing, sumoylation on Lys-391 and Lys-866 is promoted by the E3 SUMO-protein ligase CBX4, and impairs interaction with CTBP1 and transcription repression activity.

It localises to the nucleus. It is found in the chromosome. Transcriptional inhibitor that binds to DNA sequence 5'-CACCT-3' in different promoters. Represses transcription of E-cadherin. Represses expression of MEOX2. This Homo sapiens (Human) protein is Zinc finger E-box-binding homeobox 2.